A 558-amino-acid polypeptide reads, in one-letter code: Serine/threonine-protein phosphatase 2B catalytic subunit (558 aa).

3 residues coordinate Fe cation: Asp-128, His-130, and Asp-156. Positions 156 and 188 each coordinate Zn(2+). The active-site Proton donor is His-189. Zn(2+)-binding residues include His-237 and His-319. Disordered stretches follow at residues 415 to 439 (LRED…NQDP) and 534 to 558 (ALER…LSTS). Positions 420 to 435 (ATTSPGSASPALPSAA) are enriched in low complexity. Residues 534 to 548 (ALERATREADNDKKL) are compositionally biased toward basic and acidic residues. Residues 549–558 (QTLSRRLSTS) are compositionally biased toward polar residues.

It belongs to the PPP phosphatase family. PP-2B subfamily. In terms of assembly, composed of two components (A and B), the A component is the catalytic subunit and the B component confers calcium sensitivity. It depends on Fe(3+) as a cofactor. Requires Zn(2+) as cofactor.

The catalysed reaction is O-phospho-L-seryl-[protein] + H2O = L-seryl-[protein] + phosphate. It catalyses the reaction O-phospho-L-threonyl-[protein] + H2O = L-threonyl-[protein] + phosphate. Calcium-dependent, calmodulin-stimulated protein phosphatase. This subunit may have a role in the calmodulin activation of calcineurin. The chain is Serine/threonine-protein phosphatase 2B catalytic subunit (cna-1) from Neurospora crassa (strain ATCC 24698 / 74-OR23-1A / CBS 708.71 / DSM 1257 / FGSC 987).